Consider the following 461-residue polypeptide: D-phenylhydantoinase (461 aa).

A divalent metal cation is bound by residues histidine 59, histidine 61, and lysine 151. Position 151 is an N6-carboxylysine (lysine 151). Tyrosine 156 lines the substrate pocket. Residues histidine 182 and histidine 239 each coordinate a divalent metal cation. Substrate is bound at residue serine 286. Aspartate 313 contacts a divalent metal cation. Asparagine 335 is a binding site for substrate.

This sequence belongs to the metallo-dependent hydrolases superfamily. Hydantoinase/dihydropyrimidinase family. As to quaternary structure, homotetramer. Requires a divalent metal cation as cofactor. Carboxylation allows a single lysine to coordinate two divalent metal cations.

The enzyme catalyses D-5-phenylhydantoin + H2O = N-carbamoyl-D-phenylglycine + H(+). Functionally, catalyzes the stereospecific hydrolysis of the cyclic amide bond of D-hydantoin derivatives with an aromatic side chains at the 5'-position. Has no activity on dihydropyrimidines. The physiological function is unknown. The sequence is that of D-phenylhydantoinase from Escherichia coli (strain 55989 / EAEC).